Consider the following 822-residue polypeptide: MSHLDLTRHRTRSPSPSQIFGSSTTPVATNSTHSEPSASSILRSILGEYADPKRPDVSGADPIRCPVKRVHKTPAVRASSPGRENVPVRTLQSSKDAEGDNFSGDGQLTPCGGPRPLAERLSPKLLAKQTRRKGVGAQKRTKGCDLVDRILTGRSIKASATAASKSSDLPQPQRKGIPTLVKEANPGEADWEDEGLQLEPATKRKYSWTPVKDTNLSIIDLTANSGSSPPSIPGREAQKFTSLVSRYGFAETSPLAMKNEFPEDFPTRKRQLDLLQGTTNSSSSEGSSNKSSGKCPLKVNGTKGRRSRKVTTITSLSTAQYGLKDSPVESFPSVDTTERPSGKRSKSQTKKGGNKKPAGVSDFKVAPTTDALKSLEDQVYLFGTSSQLERVSSDEDKLGVPSAPASSRQSARDRTSVSTLSKYKVSRNLWAAGWRDLDGSVADIEIVDMVNIDTPKSHESSTLTLPSTSTNASNQGFSSQNTINDRSKPSQTTSTTTESTGVESGQLVVPSLCEDLSEKAGYPAVPERETLSSREIASSESAYIETMPSFRGFTTAELAQKVAAFGFKPIKSREKMISLLEKCWQSQHKNSAPTSLPANNANPPDSHASGQKNVVRCDTGGSNASHTTKRASKAPQKKQSTSSTSHSAKAGPKQVDCSQERPNHAYLPHDSTQASSQPVIVIPDSEESGDDFQDTYLGSLNRTSSTNYHPLSANSIPDGSPLFLRTISQASTEEKTSDPSDINQQITRAIKAQPRMTAINGMKRPTWLEKILMYDPIWLEDLTVWLNTEGLDRVGEDREVSRLTVREWCESKGICCTWKKPT.

Disordered stretches follow at residues 1–39 (MSHL…PSAS), 73–117 (TPAV…PRPL), 277–362 (GTTN…GVSD), 390–418 (RVSS…TSVS), 456–507 (KSHE…SGQL), and 589–676 (KNSA…QASS). Polar residues predominate over residues 13–39 (SPSPSQIFGSSTTPVATNSTHSEPSAS). Over residues 280-294 (NSSSSEGSSNKSSGK) the composition is skewed to low complexity. Positions 310–320 (VTTITSLSTAQ) are enriched in polar residues. The segment covering 342–354 (GKRSKSQTKKGGN) has biased composition (basic residues). The segment covering 460 to 470 (SSTLTLPSTST) has biased composition (low complexity). The segment covering 471 to 484 (NASNQGFSSQNTIN) has biased composition (polar residues). A compositionally biased stretch (low complexity) spans 490 to 506 (SQTTSTTTESTGVESGQ). Residues 589 to 612 (KNSAPTSLPANNANPPDSHASGQK) show a composition bias toward polar residues. Residues 627-636 (TTKRASKAPQ) show a composition bias toward basic residues. A compositionally biased stretch (low complexity) spans 637-650 (KKQSTSSTSHSAKA).

The protein belongs to the SLX4 family. In terms of assembly, forms a heterodimer with SLX1. In terms of processing, phosphorylated in response to DNA damage.

The protein localises to the nucleus. Regulatory subunit of the SLX1-SLX4 structure-specific endonuclease that resolves DNA secondary structures generated during DNA repair and recombination. Has endonuclease activity towards branched DNA substrates, introducing single-strand cuts in duplex DNA close to junctions with ss-DNA. This Coccidioides immitis (strain RS) (Valley fever fungus) protein is Structure-specific endonuclease subunit SLX4.